Consider the following 501-residue polypeptide: Aluminum-activated malate transporter 2 (501 aa).

Helical transmembrane passes span 22-42, 52-72, 78-98, 101-121, 130-150, and 166-186; these read VVHAFKVGLALALVSSFYYYQ, AMWAVMTVVVVFEFSVGATLG, AVATLVAGGLGIGAHHLASLS, TVEPILLAIFVFVLAALSTFV, RYDYGVLIFILTFALISVSGF, and VIMGGVSCVLISIFVCPVWAG. The segment at 398–425 is disordered; sequence FKNKKKPSKSNSGSIGQAMPNKSHDDDD.

This sequence belongs to the aromatic acid exporter (TC 2.A.85) family.

It is found in the membrane. Its function is as follows. Malate transporter. This Arabidopsis thaliana (Mouse-ear cress) protein is Aluminum-activated malate transporter 2 (ALMT2).